A 205-amino-acid polypeptide reads, in one-letter code: Pyridoxal 5'-phosphate synthase subunit PdxT (205 aa).

52–54 contacts L-glutamine; that stretch reads GES. Cys-84 functions as the Nucleophile in the catalytic mechanism. L-glutamine contacts are provided by residues Arg-116 and 145 to 146; that span reads IR. Active-site charge relay system residues include His-185 and Glu-187.

Belongs to the glutaminase PdxT/SNO family. As to quaternary structure, in the presence of PdxS, forms a dodecamer of heterodimers. Only shows activity in the heterodimer.

The enzyme catalyses aldehydo-D-ribose 5-phosphate + D-glyceraldehyde 3-phosphate + L-glutamine = pyridoxal 5'-phosphate + L-glutamate + phosphate + 3 H2O + H(+). It catalyses the reaction L-glutamine + H2O = L-glutamate + NH4(+). It participates in cofactor biosynthesis; pyridoxal 5'-phosphate biosynthesis. Catalyzes the hydrolysis of glutamine to glutamate and ammonia as part of the biosynthesis of pyridoxal 5'-phosphate. The resulting ammonia molecule is channeled to the active site of PdxS. This is Pyridoxal 5'-phosphate synthase subunit PdxT from Staphylothermus marinus (strain ATCC 43588 / DSM 3639 / JCM 9404 / F1).